The sequence spans 288 residues: NAD kinase (288 aa).

The active-site Proton acceptor is the D68. Residues 68–69 (DG), 142–143 (ND), R153, D172, and Q242 contribute to the NAD(+) site.

It belongs to the NAD kinase family. It depends on a divalent metal cation as a cofactor.

The protein localises to the cytoplasm. It catalyses the reaction NAD(+) + ATP = ADP + NADP(+) + H(+). In terms of biological role, involved in the regulation of the intracellular balance of NAD and NADP, and is a key enzyme in the biosynthesis of NADP. Catalyzes specifically the phosphorylation on 2'-hydroxyl of the adenosine moiety of NAD to yield NADP. This is NAD kinase from Desulforamulus reducens (strain ATCC BAA-1160 / DSM 100696 / MI-1) (Desulfotomaculum reducens).